A 552-amino-acid chain; its full sequence is Urocanate hydratase (552 aa).

Residues 48-49 (GG), Gln126, 172-174 (GMG), Asp192, 238-239 (NA), 259-263 (QTSAH), 268-269 (YL), and Tyr317 contribute to the NAD(+) site. Cys405 is a catalytic residue. Gly487 serves as a coordination point for NAD(+).

The protein belongs to the urocanase family. The cofactor is NAD(+).

It is found in the cytoplasm. The enzyme catalyses 4-imidazolone-5-propanoate = trans-urocanate + H2O. Its pathway is amino-acid degradation; L-histidine degradation into L-glutamate; N-formimidoyl-L-glutamate from L-histidine: step 2/3. In terms of biological role, catalyzes the conversion of urocanate to 4-imidazolone-5-propionate. The polypeptide is Urocanate hydratase (Streptomyces griseus subsp. griseus (strain JCM 4626 / CBS 651.72 / NBRC 13350 / KCC S-0626 / ISP 5235)).